A 191-amino-acid chain; its full sequence is MTKRLSPQLLIYGYAQGIFPMDEDGQIYWYDPDPRAIIPLDERFHVSSSLQRTIRRQTFEIRFDTAFRETMQACSERDETWISQEFIEIYSQLHAGGLAHSVEAWQDGEMVGGLYGVGLAGLFAGESMWSKARDASKVALVALVERLRAGGFQLLDTQFITPHLATFGAYEIPRAEYKQLLVKALQCSATF.

Belongs to the L/F-transferase family.

It is found in the cytoplasm. The catalysed reaction is N-terminal L-lysyl-[protein] + L-leucyl-tRNA(Leu) = N-terminal L-leucyl-L-lysyl-[protein] + tRNA(Leu) + H(+). It carries out the reaction N-terminal L-arginyl-[protein] + L-leucyl-tRNA(Leu) = N-terminal L-leucyl-L-arginyl-[protein] + tRNA(Leu) + H(+). It catalyses the reaction L-phenylalanyl-tRNA(Phe) + an N-terminal L-alpha-aminoacyl-[protein] = an N-terminal L-phenylalanyl-L-alpha-aminoacyl-[protein] + tRNA(Phe). Functionally, functions in the N-end rule pathway of protein degradation where it conjugates Leu, Phe and, less efficiently, Met from aminoacyl-tRNAs to the N-termini of proteins containing an N-terminal arginine or lysine. This chain is Leucyl/phenylalanyl-tRNA--protein transferase, found in Herpetosiphon aurantiacus (strain ATCC 23779 / DSM 785 / 114-95).